A 350-amino-acid polypeptide reads, in one-letter code: Probable lactoylglutathione lyase, chloroplastic (350 aa).

A chloroplast-targeting transit peptide spans 1–61 (MVRIIPMAAS…KLLRRSVNCL (61 aa)). VOC domains are found at residues 88 to 212 (RMLH…LLER) and 218 to 342 (PLCQ…FVDN). His-91 contributes to the Zn(2+) binding site. Residue Arg-95 participates in substrate binding. Zn(2+) is bound at residue Glu-142. Substrate contacts are provided by Asn-146 and His-160. Zn(2+)-binding residues include His-160 and Glu-208. Catalysis depends on Glu-208, which acts as the Proton donor/acceptor.

It belongs to the glyoxalase I family. The cofactor is Zn(2+).

It is found in the plastid. The protein resides in the chloroplast stroma. The enzyme catalyses (R)-S-lactoylglutathione = methylglyoxal + glutathione. The protein operates within secondary metabolite metabolism; methylglyoxal degradation; (R)-lactate from methylglyoxal: step 1/2. In terms of biological role, catalyzes the conversion of hemimercaptal, formed from methylglyoxal and glutathione, to S-lactoylglutathione. This Arabidopsis thaliana (Mouse-ear cress) protein is Probable lactoylglutathione lyase, chloroplastic.